Here is a 635-residue protein sequence, read N- to C-terminus: Threonine--tRNA ligase (635 aa).

Positions 1–61 (MIQITLPDAS…EKDSALSIIT (61 aa)) constitute a TGS domain. Residues 242–533 (DHRKLGKELD…LIEEHAGALP (292 aa)) form a catalytic region. Positions 333, 384, and 510 each coordinate Zn(2+).

The protein belongs to the class-II aminoacyl-tRNA synthetase family. In terms of assembly, homodimer. Zn(2+) is required as a cofactor.

Its subcellular location is the cytoplasm. The enzyme catalyses tRNA(Thr) + L-threonine + ATP = L-threonyl-tRNA(Thr) + AMP + diphosphate + H(+). Functionally, catalyzes the attachment of threonine to tRNA(Thr) in a two-step reaction: L-threonine is first activated by ATP to form Thr-AMP and then transferred to the acceptor end of tRNA(Thr). Also edits incorrectly charged L-seryl-tRNA(Thr). This chain is Threonine--tRNA ligase, found in Polaromonas sp. (strain JS666 / ATCC BAA-500).